The primary structure comprises 209 residues: Protein Sxy (209 aa).

This sequence belongs to the Sxy/TfoX family.

In terms of biological role, induces low levels of natural DNA uptake by inducing transcription of the competence genes (the CRP-S regulon) required for DNA transformation. Induction of the CRP-S regulon also requires Sxy-activated promoter (CRP-S), cAMP receptor protein (CRP) and cAMP. Induces CRP-S site-containing genes which are involved in genome maintenance and transcription or encoding transposases and toxin-antitoxin pairs. This is Protein Sxy from Escherichia coli (strain K12).